Reading from the N-terminus, the 100-residue chain is Urease subunit gamma (100 aa).

The protein belongs to the urease gamma subunit family. In terms of assembly, heterotrimer of UreA (gamma), UreB (beta) and UreC (alpha) subunits. Three heterotrimers associate to form the active enzyme.

It localises to the cytoplasm. It catalyses the reaction urea + 2 H2O + H(+) = hydrogencarbonate + 2 NH4(+). It functions in the pathway nitrogen metabolism; urea degradation; CO(2) and NH(3) from urea (urease route): step 1/1. This is Urease subunit gamma from Yersinia bercovieri.